We begin with the raw amino-acid sequence, 425 residues long: tRNA(Ile)-lysidine synthase (425 aa).

Residue 27 to 32 (SGGLDS) coordinates ATP.

It belongs to the tRNA(Ile)-lysidine synthase family.

It is found in the cytoplasm. The enzyme catalyses cytidine(34) in tRNA(Ile2) + L-lysine + ATP = lysidine(34) in tRNA(Ile2) + AMP + diphosphate + H(+). Functionally, ligates lysine onto the cytidine present at position 34 of the AUA codon-specific tRNA(Ile) that contains the anticodon CAU, in an ATP-dependent manner. Cytidine is converted to lysidine, thus changing the amino acid specificity of the tRNA from methionine to isoleucine. This chain is tRNA(Ile)-lysidine synthase, found in Streptococcus pneumoniae (strain Hungary19A-6).